A 333-amino-acid polypeptide reads, in one-letter code: Beta-ketoacyl-[acyl-carrier-protein] synthase III (333 aa).

Active-site residues include cysteine 114 and histidine 255. Residues 256–260 (QANYR) form an ACP-binding region. Asparagine 285 is a catalytic residue.

Belongs to the thiolase-like superfamily. FabH family. As to quaternary structure, homodimer.

Its subcellular location is the cytoplasm. The enzyme catalyses malonyl-[ACP] + acetyl-CoA + H(+) = 3-oxobutanoyl-[ACP] + CO2 + CoA. Its pathway is lipid metabolism; fatty acid biosynthesis. Catalyzes the condensation reaction of fatty acid synthesis by the addition to an acyl acceptor of two carbons from malonyl-ACP. Catalyzes the first condensation reaction which initiates fatty acid synthesis and may therefore play a role in governing the total rate of fatty acid production. Possesses both acetoacetyl-ACP synthase and acetyl transacylase activities. Its substrate specificity determines the biosynthesis of branched-chain and/or straight-chain of fatty acids. The chain is Beta-ketoacyl-[acyl-carrier-protein] synthase III from Aliarcobacter butzleri (strain RM4018) (Arcobacter butzleri).